The primary structure comprises 644 residues: Protein ETHYLENE-INSENSITIVE 3-like 1b (644 aa).

Disordered regions lie at residues 47-75 and 97-131; these read QCVM…DDDV and ELQL…KMSR. The span at 66–75 shows a compositional bias: acidic residues; the sequence is AGEDDSDDDV.

This sequence belongs to the EIN3 family. As to expression, highly expressed in roots. Expressed at low levels in leaves and panicles.

The protein localises to the nucleus. Its function is as follows. Transcription factor acting as a positive regulator in the ethylene response pathway. Involved in wound signaling by binding specifically to the DNA sequence 5'-ATGTACCT-3' found in the promoter of some wound-inducible genes. Binds directly to the DNA sequence 5'-TGTTACAAATACC-3' in the promoter of the GA20OX2 gene to activate its expression at the transcriptional level during ethylene signaling. This Oryza sativa subsp. japonica (Rice) protein is Protein ETHYLENE-INSENSITIVE 3-like 1b.